Consider the following 124-residue polypeptide: Small ribosomal subunit protein uS12 (124 aa).

Position 89 is a 3-methylthioaspartic acid (Asp-89).

The protein belongs to the universal ribosomal protein uS12 family. In terms of assembly, part of the 30S ribosomal subunit. Contacts proteins S8 and S17. May interact with IF1 in the 30S initiation complex.

Functionally, with S4 and S5 plays an important role in translational accuracy. Interacts with and stabilizes bases of the 16S rRNA that are involved in tRNA selection in the A site and with the mRNA backbone. Located at the interface of the 30S and 50S subunits, it traverses the body of the 30S subunit contacting proteins on the other side and probably holding the rRNA structure together. The combined cluster of proteins S8, S12 and S17 appears to hold together the shoulder and platform of the 30S subunit. In Tolumonas auensis (strain DSM 9187 / NBRC 110442 / TA 4), this protein is Small ribosomal subunit protein uS12.